The sequence spans 208 residues: V-type proton ATPase subunit E (208 aa).

Belongs to the V-ATPase E subunit family.

In terms of biological role, produces ATP from ADP in the presence of a proton gradient across the membrane. This is V-type proton ATPase subunit E from Chlamydia trachomatis serovar L2 (strain ATCC VR-902B / DSM 19102 / 434/Bu).